Reading from the N-terminus, the 210-residue chain is Protein GrpE (210 aa).

The protein belongs to the GrpE family. As to quaternary structure, homodimer.

The protein localises to the cytoplasm. Functionally, participates actively in the response to hyperosmotic and heat shock by preventing the aggregation of stress-denatured proteins, in association with DnaK and GrpE. It is the nucleotide exchange factor for DnaK and may function as a thermosensor. Unfolded proteins bind initially to DnaJ; upon interaction with the DnaJ-bound protein, DnaK hydrolyzes its bound ATP, resulting in the formation of a stable complex. GrpE releases ADP from DnaK; ATP binding to DnaK triggers the release of the substrate protein, thus completing the reaction cycle. Several rounds of ATP-dependent interactions between DnaJ, DnaK and GrpE are required for fully efficient folding. This chain is Protein GrpE, found in Rhizobium leguminosarum bv. trifolii (strain WSM2304).